Here is an 867-residue protein sequence, read N- to C-terminus: uncharacterized protein (867 aa).

A DNA-binding region (zn(2)-C6 fungal-type) is located at residues 76-108; it reads CDFCRQKKIRCDMDQSPRPGNACINCRKHHLDC. 2 disordered regions span residues 110–167 and 217–257; these read FTRT…ITPV and PQLA…NSNL. Polar residues-rich tracts occupy residues 137 to 167 and 248 to 257; these read SAKS…ITPV and SISSYTNSNL.

The protein localises to the nucleus. This is an uncharacterized protein from Schizosaccharomyces pombe (strain 972 / ATCC 24843) (Fission yeast).